The sequence spans 488 residues: Probable phenylalanine--tRNA ligase alpha subunit (488 aa).

Positions 1-146 (MSIEQDILNL…KRKLVDINKK (146 aa)) are contains the major tRNA-Phe binding sites. Residues Thr-315, 363–365 (QVE), and Tyr-403 each bind L-phenylalanine. Residue Glu-405 participates in Mg(2+) binding. Phe-429 contacts L-phenylalanine.

The protein belongs to the class-II aminoacyl-tRNA synthetase family. Phe-tRNA synthetase alpha subunit type 2 subfamily. In terms of assembly, tetramer of two alpha and two beta subunits. It depends on Mg(2+) as a cofactor.

The protein resides in the cytoplasm. It catalyses the reaction tRNA(Phe) + L-phenylalanine + ATP = L-phenylalanyl-tRNA(Phe) + AMP + diphosphate + H(+). The chain is Probable phenylalanine--tRNA ligase alpha subunit from Enterocytozoon bieneusi (strain H348) (Microsporidian parasite).